A 426-amino-acid chain; its full sequence is Serine--tRNA ligase (426 aa).

233–235 (TAE) lines the L-serine pocket. Position 264–266 (264–266 (RSE)) interacts with ATP. Residue glutamate 287 participates in L-serine binding. 351-354 (EISS) contacts ATP. Serine 387 contributes to the L-serine binding site.

This sequence belongs to the class-II aminoacyl-tRNA synthetase family. Type-1 seryl-tRNA synthetase subfamily. In terms of assembly, homodimer. The tRNA molecule binds across the dimer.

It is found in the cytoplasm. It catalyses the reaction tRNA(Ser) + L-serine + ATP = L-seryl-tRNA(Ser) + AMP + diphosphate + H(+). The enzyme catalyses tRNA(Sec) + L-serine + ATP = L-seryl-tRNA(Sec) + AMP + diphosphate + H(+). It participates in aminoacyl-tRNA biosynthesis; selenocysteinyl-tRNA(Sec) biosynthesis; L-seryl-tRNA(Sec) from L-serine and tRNA(Sec): step 1/1. Functionally, catalyzes the attachment of serine to tRNA(Ser). Is also able to aminoacylate tRNA(Sec) with serine, to form the misacylated tRNA L-seryl-tRNA(Sec), which will be further converted into selenocysteinyl-tRNA(Sec). This chain is Serine--tRNA ligase, found in Pseudomonas putida (strain GB-1).